Reading from the N-terminus, the 261-residue chain is Acetylglutamate kinase (261 aa).

Substrate-binding positions include 46–47 (GG), Arg-68, and Asn-160.

It belongs to the acetylglutamate kinase family. ArgB subfamily.

Its subcellular location is the cytoplasm. The enzyme catalyses N-acetyl-L-glutamate + ATP = N-acetyl-L-glutamyl 5-phosphate + ADP. It functions in the pathway amino-acid biosynthesis; L-arginine biosynthesis; N(2)-acetyl-L-ornithine from L-glutamate: step 2/4. In terms of biological role, catalyzes the ATP-dependent phosphorylation of N-acetyl-L-glutamate. This chain is Acetylglutamate kinase, found in Shewanella loihica (strain ATCC BAA-1088 / PV-4).